A 201-amino-acid chain; its full sequence is Putative ferritin heavy polypeptide-like 19 (201 aa).

Positions 1–123 constitute a Ferritin-like diiron domain; sequence MAFYFDQDDA…GYLSNLHKMG (123 aa).

Belongs to the ferritin family.

The chain is Putative ferritin heavy polypeptide-like 19 (FTH1P19) from Homo sapiens (Human).